A 372-amino-acid chain; its full sequence is 3-dehydroquinate synthase (372 aa).

Residues 116–120 (GVVGD), 140–141 (TT), lysine 153, lysine 162, and 180–183 (TLNT) contribute to the NAD(+) site. The Zn(2+) site is built by glutamate 195, histidine 260, and histidine 277.

The protein belongs to the sugar phosphate cyclases superfamily. Dehydroquinate synthase family. Co(2+) serves as cofactor. It depends on Zn(2+) as a cofactor. The cofactor is NAD(+).

The protein localises to the cytoplasm. The catalysed reaction is 7-phospho-2-dehydro-3-deoxy-D-arabino-heptonate = 3-dehydroquinate + phosphate. Its pathway is metabolic intermediate biosynthesis; chorismate biosynthesis; chorismate from D-erythrose 4-phosphate and phosphoenolpyruvate: step 2/7. Functionally, catalyzes the conversion of 3-deoxy-D-arabino-heptulosonate 7-phosphate (DAHP) to dehydroquinate (DHQ). The polypeptide is 3-dehydroquinate synthase (Prochlorococcus marinus (strain MIT 9303)).